The sequence spans 310 residues: Carbamate kinase-like protein YqeA (310 aa).

This sequence belongs to the carbamate kinase family.

The protein is Carbamate kinase-like protein YqeA (yqeA) of Escherichia coli (strain K12).